The chain runs to 157 residues: Ribosome maturation factor RimP (157 aa).

Belongs to the RimP family.

It is found in the cytoplasm. Its function is as follows. Required for maturation of 30S ribosomal subunits. The protein is Ribosome maturation factor RimP of Petrotoga mobilis (strain DSM 10674 / SJ95).